A 1976-amino-acid polypeptide reads, in one-letter code: Myosin-10 (1976 aa).

R18 is subject to Omega-N-methylarginine. The 51-residue stretch at 31 to 81 folds into the Myosin N-terminal SH3-like domain; the sequence is TAKKLVWIPSERHGFEAASIKEERGDEVMVELAENGKKAMVNKDDIQKMNP. Positions 85 to 783 constitute a Myosin motor domain; sequence SKVEDMAELT…VLAHLEEERD (699 aa). 178–185 contacts ATP; that stretch reads GESGAGKT. The residue at position 214 (L214) is a Phosphoserine. An N6-acetyllysine modification is found at K442. The segment at 661 to 683 is actin-binding; that stretch reads LTKLMATLRNTNPNFVRCIIPNH. The IQ domain maps to 786-815; sequence ITDIIIFFQAVCRGYLARKAFAKKQQQLSA. Positions 845–1976 form a coiled coil; sequence LQVTRQEEEL…VNETQPPQSE (1132 aa). A disordered region spans residues 1127-1147; it reads FESEKASRNKAEKQKRDLSEE. Residues 1129–1147 are compositionally biased toward basic and acidic residues; sequence SEKASRNKAEKQKRDLSEE. S1145 is subject to Phosphoserine. Residues K1241, K1301, and K1645 each carry the N6-acetyllysine modification. Disordered stretches follow at residues 1697-1728 and 1872-1976; these read ASSERARRHAEQERDELADEITNSASGKSALL and MEKA…PQSE. The span at 1698–1708 shows a compositional bias: basic and acidic residues; it reads SSERARRHAEQ. Position 1930 is an omega-N-methylarginine (R1930). 4 positions are modified to phosphoserine: S1935, S1937, S1938, and S1939. At R1940 the chain carries Omega-N-methylarginine. Phosphoserine occurs at positions 1952 and 1956. T1960 carries the phosphothreonine modification. Residues 1967 to 1976 show a composition bias toward polar residues; sequence VNETQPPQSE. Position 1975 is a phosphoserine (S1975).

This sequence belongs to the TRAFAC class myosin-kinesin ATPase superfamily. Myosin family. In terms of assembly, myosin is a hexameric protein that consists of 2 heavy chain subunits (MHC), 2 alkali light chain subunits (MLC) and 2 regulatory light chain subunits (MLC-2). Interacts with PLEKHG6. Interacts with ECPAS. Interacts with KIF26B. Interacts with LARP6. Interacts with MCC. Interacts with CFAP95. (Microbial infection) Interacts with herpes simplex virus 1/HHV-1 envelope glycoprotein B. In terms of processing, phosphorylated by ABL2. As to expression, isoform 1 is expressed in cerebellum and spinal chord. Isoform 2 is expressed in cerebrum and retina. Isoform 3 is expressed in the cerebrum and to a much lower extent in cerebellum.

It is found in the cell projection. Its subcellular location is the lamellipodium. It localises to the cell membrane. Functionally, cellular myosin that appears to play a role in cytokinesis, cell shape, and specialized functions such as secretion and capping. Involved with LARP6 in the stabilization of type I collagen mRNAs for CO1A1 and CO1A2. During cell spreading, plays an important role in cytoskeleton reorganization, focal contacts formation (in the central part but not the margins of spreading cells), and lamellipodial extension; this function is mechanically antagonized by MYH9. (Microbial infection) Acts as a receptor for herpes simplex virus 1/HHV-1 envelope glycoprotein B. This chain is Myosin-10 (MYH10), found in Homo sapiens (Human).